Here is a 177-residue protein sequence, read N- to C-terminus: Nucleoside triphosphate/diphosphate phosphatase (177 aa).

The active-site Proton donor is the Arg23. Mg(2+) contacts are provided by Asn87, Asp103, Asp105, Asp107, Asp120, and Glu123.

This sequence belongs to the Ntdp family. The cofactor is Mg(2+).

The enzyme catalyses a ribonucleoside 5'-triphosphate + H2O = a ribonucleoside 5'-diphosphate + phosphate + H(+). The catalysed reaction is a ribonucleoside 5'-diphosphate + H2O = a ribonucleoside 5'-phosphate + phosphate + H(+). Its function is as follows. Has nucleoside phosphatase activity towards nucleoside triphosphates and nucleoside diphosphates. This is Nucleoside triphosphate/diphosphate phosphatase from Streptococcus equi subsp. zooepidemicus (strain MGCS10565).